A 443-amino-acid polypeptide reads, in one-letter code: MSEMTPREIVSELNKHIIGQDNAKRSVAIALRNRWRRMQLDEELRHEVTPKNILMIGPTGVGKTEIARRLAKLANAPFIKVEATKFTEVGYVGKEVDSIIRDLTDAAVKMVRVQAIEKNRYRAEELAEERILDVLIPPAKNNWGQAEQQQEPSAARQTFRKKLREGQLDDKEIEINLAAAPMGVEIMAPPGMEEMTSQLQSMFQNLGGQKQKPRKLKIKDAMKLLVEEEAAKLVNPEELKQDAIDAVEQHGIVFIDEIDKICKRGETSGPDVSREGVQRDLLPLVEGCTVSTKHGMVKTDHILFIASGAFQVAKPSDLIPELQGRLPIRVELQALTTSDFERILTEPNASVTVQYKALMATEGVNIEFTDSGIKRIAEAAWQVNETTENIGARRLHTVLERLMEEISYNASDLHGQNITIDAEYVSKHLDALVADEDLSRFIL.

Residues Ile-18, 60-65, Asp-256, Glu-321, and Arg-393 each bind ATP; that span reads GVGKTE.

This sequence belongs to the ClpX chaperone family. HslU subfamily. As to quaternary structure, a double ring-shaped homohexamer of HslV is capped on each side by a ring-shaped HslU homohexamer. The assembly of the HslU/HslV complex is dependent on binding of ATP.

It is found in the cytoplasm. ATPase subunit of a proteasome-like degradation complex; this subunit has chaperone activity. The binding of ATP and its subsequent hydrolysis by HslU are essential for unfolding of protein substrates subsequently hydrolyzed by HslV. HslU recognizes the N-terminal part of its protein substrates and unfolds these before they are guided to HslV for hydrolysis. The protein is ATP-dependent protease ATPase subunit HslU of Salmonella agona (strain SL483).